The chain runs to 459 residues: ATP-binding protein Uup-like (459 aa).

In terms of domain architecture, ABC transporter spans 132–350 (FEMEDVSYEI…QQANFWASKA (219 aa)). 164 to 171 (GPNGCGKT) lines the ATP pocket. The span at 357-375 (AKKSEPLKEESAVKNDRTS) shows a compositional bias: basic and acidic residues. Positions 357–381 (AKKSEPLKEESAVKNDRTSKPKSVK) are disordered.

Belongs to the ABC transporter superfamily. ABCF family. Uup subfamily.

The protein localises to the cytoplasm. The catalysed reaction is ATP + H2O = ADP + phosphate + H(+). Might play a role in ribosome assembly or function; this is missing the first ABC transporter domain compared to paralogs. The protein is ATP-binding protein Uup-like (uup-B) of Haemophilus influenzae (strain ATCC 51907 / DSM 11121 / KW20 / Rd).